The primary structure comprises 284 residues: RNase adapter protein RapZ (284 aa).

ATP is bound at residue 8-15; sequence GRSGSGKS. 56–59 provides a ligand contact to GTP; sequence DVRN. The tract at residues 266–284 is RNA-binding; it reads RSRGKNVQSRHRTLEKRRS.

It belongs to the RapZ-like family. RapZ subfamily. In terms of assembly, homotrimer.

In terms of biological role, modulates the synthesis of GlmS, by affecting the processing and stability of the regulatory small RNA GlmZ. When glucosamine-6-phosphate (GlcN6P) concentrations are high in the cell, RapZ binds GlmZ and targets it to cleavage by RNase E. Consequently, GlmZ is inactivated and unable to activate GlmS synthesis. Under low GlcN6P concentrations, RapZ is sequestered and inactivated by an other regulatory small RNA, GlmY, preventing GlmZ degradation and leading to synthesis of GlmS. This Erwinia tasmaniensis (strain DSM 17950 / CFBP 7177 / CIP 109463 / NCPPB 4357 / Et1/99) protein is RNase adapter protein RapZ.